Reading from the N-terminus, the 591-residue chain is Polyphenol oxidase D, chloroplastic (591 aa).

A chloroplast-targeting transit peptide spans 1–83 (MASLCSNSST…ANAIPLAASA (83 aa)). Cystine bridges form between Cys94–Cys110 and Cys109–Cys177. Cu cation-binding residues include His176, His194, His203, His324, His328, and His366. The segment at residues 180 to 194 (CNGAYRIGGKELQVH) is a cross-link (2'-(S-cysteinyl)-histidine (Cys-His)).

Belongs to the tyrosinase family. Cu(2+) is required as a cofactor.

It is found in the plastid. Its subcellular location is the chloroplast thylakoid lumen. It carries out the reaction 2 catechol + O2 = 2 1,2-benzoquinone + 2 H2O. In terms of biological role, catalyzes the oxidation of mono- and o-diphenols to o-diquinones. The sequence is that of Polyphenol oxidase D, chloroplastic from Solanum lycopersicum (Tomato).